We begin with the raw amino-acid sequence, 197 residues long: FMN-dependent NADH:quinone oxidoreductase (197 aa).

FMN is bound by residues Ser10, 16 to 18 (SQS), 93 to 96 (MYNF), and 137 to 140 (TRGG).

It belongs to the azoreductase type 1 family. In terms of assembly, homodimer. FMN is required as a cofactor.

It catalyses the reaction 2 a quinone + NADH + H(+) = 2 a 1,4-benzosemiquinone + NAD(+). It carries out the reaction N,N-dimethyl-1,4-phenylenediamine + anthranilate + 2 NAD(+) = 2-(4-dimethylaminophenyl)diazenylbenzoate + 2 NADH + 2 H(+). In terms of biological role, quinone reductase that provides resistance to thiol-specific stress caused by electrophilic quinones. Its function is as follows. Also exhibits azoreductase activity. Catalyzes the reductive cleavage of the azo bond in aromatic azo compounds to the corresponding amines. The sequence is that of FMN-dependent NADH:quinone oxidoreductase from Shewanella denitrificans (strain OS217 / ATCC BAA-1090 / DSM 15013).